We begin with the raw amino-acid sequence, 214 residues long: tRNA (guanine-N(7)-)-methyltransferase (214 aa).

The S-adenosyl-L-methionine site is built by D35, E60, N87, and D113. D113 is an active-site residue. The substrate site is built by K117 and D149.

This sequence belongs to the class I-like SAM-binding methyltransferase superfamily. TrmB family.

The enzyme catalyses guanosine(46) in tRNA + S-adenosyl-L-methionine = N(7)-methylguanosine(46) in tRNA + S-adenosyl-L-homocysteine. It functions in the pathway tRNA modification; N(7)-methylguanine-tRNA biosynthesis. Functionally, catalyzes the formation of N(7)-methylguanine at position 46 (m7G46) in tRNA. This is tRNA (guanine-N(7)-)-methyltransferase from Prochlorococcus marinus (strain NATL1A).